The sequence spans 456 residues: Cell cycle checkpoint control protein Rad9 (456 aa).

The short motif at 300–302 (KRK) is the Nuclear localization signal element.

The protein belongs to the rad9 family. Component of the 9-1-1 checkpoint clamp complex consisting of Rad9 isoform A, Rad1 and Hus1-like; the interaction with Hus1-like is direct. Does not interact directly with Rad1; this interaction is probably mediated by Hus1-like. This complex probably also forms with Rad9 isoform B, however 9-1-1 complex containing Rad9 isoform A localizes to the nuclear periphery. Interacts with Brca2. Expressed in ovary.

The protein resides in the nucleus envelope. Its subcellular location is the nucleus. In terms of biological role, component of the Rad9-Rad1-Hus1 (9-1-1) checkpoint clamp complex. Its function is as follows. Targets the 9-1-1 complex to the nuclear periphery. Targeting to the nuclear periphery is disrupted in the presence of persistent double stranded break DNA damage, possibly as a function of the meiotic checkpoint. This Drosophila melanogaster (Fruit fly) protein is Cell cycle checkpoint control protein Rad9.